Reading from the N-terminus, the 195-residue chain is Small ribosomal subunit protein uS4 (195 aa).

One can recognise an S4 RNA-binding domain in the interval 109-183 (RRLQTQVFKL…VKRKNLKKNQ (75 aa)). Residues 165 to 195 (PFGGGRPGRVKRKNLKKNQGGGGGAAEEEED) form a disordered region.

This sequence belongs to the universal ribosomal protein uS4 family. Component of the small ribosomal subunit. Identified in a IGF2BP1-dependent mRNP granule complex containing untranslated mRNAs. Part of the small subunit (SSU) processome, composed of more than 70 proteins and the RNA chaperone small nucleolar RNA (snoRNA) U3.

It localises to the cytoplasm. It is found in the nucleus. The protein resides in the nucleolus. In terms of biological role, component of the small ribosomal subunit. The ribosome is a large ribonucleoprotein complex responsible for the synthesis of proteins in the cell. Part of the small subunit (SSU) processome, first precursor of the small eukaryotic ribosomal subunit. During the assembly of the SSU processome in the nucleolus, many ribosome biogenesis factors, an RNA chaperone and ribosomal proteins associate with the nascent pre-rRNA and work in concert to generate RNA folding, modifications, rearrangements and cleavage as well as targeted degradation of pre-ribosomal RNA by the RNA exosome. The sequence is that of Small ribosomal subunit protein uS4 from Drosophila melanogaster (Fruit fly).